The following is a 398-amino-acid chain: 1-deoxy-D-xylulose 5-phosphate reductoisomerase (398 aa).

7 residues coordinate NADPH: threonine 10, glycine 11, serine 12, isoleucine 13, glycine 36, asparagine 38, and asparagine 124. Lysine 125 provides a ligand contact to 1-deoxy-D-xylulose 5-phosphate. Glutamate 126 is a binding site for NADPH. Aspartate 150 provides a ligand contact to Mn(2+). 1-deoxy-D-xylulose 5-phosphate contacts are provided by serine 151, glutamate 152, serine 176, and histidine 199. Glutamate 152 provides a ligand contact to Mn(2+). Glycine 205 contacts NADPH. 1-deoxy-D-xylulose 5-phosphate is bound by residues serine 212, asparagine 217, lysine 218, and glutamate 221. Residue glutamate 221 participates in Mn(2+) binding.

The protein belongs to the DXR family. The cofactor is Mg(2+). Requires Mn(2+) as cofactor.

The enzyme catalyses 2-C-methyl-D-erythritol 4-phosphate + NADP(+) = 1-deoxy-D-xylulose 5-phosphate + NADPH + H(+). Its pathway is isoprenoid biosynthesis; isopentenyl diphosphate biosynthesis via DXP pathway; isopentenyl diphosphate from 1-deoxy-D-xylulose 5-phosphate: step 1/6. Functionally, catalyzes the NADPH-dependent rearrangement and reduction of 1-deoxy-D-xylulose-5-phosphate (DXP) to 2-C-methyl-D-erythritol 4-phosphate (MEP). The sequence is that of 1-deoxy-D-xylulose 5-phosphate reductoisomerase from Nostoc punctiforme (strain ATCC 29133 / PCC 73102).